The sequence spans 476 residues: Ribulose bisphosphate carboxylase large chain (476 aa).

Residues 1 to 2 (MS) constitute a propeptide that is removed on maturation. Residue proline 3 is modified to N-acetylproline. Lysine 14 is modified (N6,N6,N6-trimethyllysine). Substrate is bound by residues asparagine 123 and threonine 173. Lysine 175 serves as the catalytic Proton acceptor. Lysine 177 provides a ligand contact to substrate. Lysine 201, aspartate 203, and glutamate 204 together coordinate Mg(2+). Lysine 201 bears the N6-carboxylysine mark. Histidine 294 serves as the catalytic Proton acceptor. Substrate-binding residues include arginine 295, histidine 327, and serine 379.

Belongs to the RuBisCO large chain family. Type I subfamily. As to quaternary structure, heterohexadecamer of 8 large chains and 8 small chains; disulfide-linked. The disulfide link is formed within the large subunit homodimers. Mg(2+) serves as cofactor. Post-translationally, the disulfide bond which can form in the large chain dimeric partners within the hexadecamer appears to be associated with oxidative stress and protein turnover.

Its subcellular location is the plastid. The protein localises to the chloroplast. It carries out the reaction 2 (2R)-3-phosphoglycerate + 2 H(+) = D-ribulose 1,5-bisphosphate + CO2 + H2O. The enzyme catalyses D-ribulose 1,5-bisphosphate + O2 = 2-phosphoglycolate + (2R)-3-phosphoglycerate + 2 H(+). RuBisCO catalyzes two reactions: the carboxylation of D-ribulose 1,5-bisphosphate, the primary event in carbon dioxide fixation, as well as the oxidative fragmentation of the pentose substrate in the photorespiration process. Both reactions occur simultaneously and in competition at the same active site. In Liriodendron tulipifera (Tuliptree), this protein is Ribulose bisphosphate carboxylase large chain.